The sequence spans 166 residues: Protein-export protein SecB (166 aa).

The protein belongs to the SecB family. In terms of assembly, homotetramer, a dimer of dimers. One homotetramer interacts with 1 SecA dimer.

It localises to the cytoplasm. Functionally, one of the proteins required for the normal export of preproteins out of the cell cytoplasm. It is a molecular chaperone that binds to a subset of precursor proteins, maintaining them in a translocation-competent state. It also specifically binds to its receptor SecA. This is Protein-export protein SecB from Roseobacter denitrificans (strain ATCC 33942 / OCh 114) (Erythrobacter sp. (strain OCh 114)).